Reading from the N-terminus, the 263-residue chain is 3-methyl-2-oxobutanoate hydroxymethyltransferase (263 aa).

Positions 45 and 84 each coordinate Mg(2+). 3-methyl-2-oxobutanoate contacts are provided by residues 45–46 (DS), Asp84, and Lys112. Position 114 (Glu114) interacts with Mg(2+). Glu180 acts as the Proton acceptor in catalysis.

It belongs to the PanB family. Homodecamer; pentamer of dimers. It depends on Mg(2+) as a cofactor.

Its subcellular location is the cytoplasm. The catalysed reaction is 3-methyl-2-oxobutanoate + (6R)-5,10-methylene-5,6,7,8-tetrahydrofolate + H2O = 2-dehydropantoate + (6S)-5,6,7,8-tetrahydrofolate. The protein operates within cofactor biosynthesis; (R)-pantothenate biosynthesis; (R)-pantoate from 3-methyl-2-oxobutanoate: step 1/2. Its function is as follows. Catalyzes the reversible reaction in which hydroxymethyl group from 5,10-methylenetetrahydrofolate is transferred onto alpha-ketoisovalerate to form ketopantoate. This Salmonella paratyphi C (strain RKS4594) protein is 3-methyl-2-oxobutanoate hydroxymethyltransferase.